Here is a 169-residue protein sequence, read N- to C-terminus: S-ribosylhomocysteine lyase (169 aa).

3 residues coordinate Fe cation: histidine 54, histidine 58, and cysteine 128.

It belongs to the LuxS family. In terms of assembly, homodimer. Requires Fe cation as cofactor.

The catalysed reaction is S-(5-deoxy-D-ribos-5-yl)-L-homocysteine = (S)-4,5-dihydroxypentane-2,3-dione + L-homocysteine. Functionally, involved in the synthesis of autoinducer 2 (AI-2) which is secreted by bacteria and is used to communicate both the cell density and the metabolic potential of the environment. The regulation of gene expression in response to changes in cell density is called quorum sensing. Catalyzes the transformation of S-ribosylhomocysteine (RHC) to homocysteine (HC) and 4,5-dihydroxy-2,3-pentadione (DPD). The sequence is that of S-ribosylhomocysteine lyase from Shewanella frigidimarina (strain NCIMB 400).